Here is a 279-residue protein sequence, read N- to C-terminus: Putative pyruvate, phosphate dikinase regulatory protein (279 aa).

157-164 (GVSRTSKT) is a binding site for ADP.

Belongs to the pyruvate, phosphate/water dikinase regulatory protein family. PDRP subfamily.

The enzyme catalyses N(tele)-phospho-L-histidyl/L-threonyl-[pyruvate, phosphate dikinase] + ADP = N(tele)-phospho-L-histidyl/O-phospho-L-threonyl-[pyruvate, phosphate dikinase] + AMP + H(+). The catalysed reaction is N(tele)-phospho-L-histidyl/O-phospho-L-threonyl-[pyruvate, phosphate dikinase] + phosphate + H(+) = N(tele)-phospho-L-histidyl/L-threonyl-[pyruvate, phosphate dikinase] + diphosphate. In terms of biological role, bifunctional serine/threonine kinase and phosphorylase involved in the regulation of the pyruvate, phosphate dikinase (PPDK) by catalyzing its phosphorylation/dephosphorylation. The protein is Putative pyruvate, phosphate dikinase regulatory protein of Lactobacillus helveticus (strain DPC 4571).